A 739-amino-acid chain; its full sequence is Catalase-peroxidase 2 (739 aa).

The signal sequence occupies residues 1–26; it reads MKKTTIPTLSALTLAMSLAFGGAAIA. The segment at residues 105–227 is a cross-link (tryptophyl-tyrosyl-methioninium (Trp-Tyr) (with M-253)); sequence WHSAGVYRIF…MGATQMGLIY (123 aa). Histidine 106 (proton acceptor) is an active-site residue. The segment at residues 227-253 is a cross-link (tryptophyl-tyrosyl-methioninium (Tyr-Met) (with W-105)); sequence YVNPEGPNGVPDPLASAKEIRDTFGRM. Histidine 268 provides a ligand contact to heme b.

This sequence belongs to the peroxidase family. Peroxidase/catalase subfamily. In terms of assembly, homodimer or homotetramer. Heme b is required as a cofactor. Formation of the three residue Trp-Tyr-Met cross-link is important for the catalase, but not the peroxidase activity of the enzyme.

It catalyses the reaction H2O2 + AH2 = A + 2 H2O. The catalysed reaction is 2 H2O2 = O2 + 2 H2O. Functionally, bifunctional enzyme with both catalase and broad-spectrum peroxidase activity. The sequence is that of Catalase-peroxidase 2 from Shewanella sp. (strain MR-4).